The chain runs to 274 residues: Type II restriction enzyme HgiEI (274 aa).

It belongs to the TdeIII type II restriction endonuclease family.

It carries out the reaction Endonucleolytic cleavage of DNA to give specific double-stranded fragments with terminal 5'-phosphates.. Its function is as follows. A P subtype restriction enzyme that recognizes the double-stranded sequence 5'-GGWCC-3' and cleaves after G-1. This system is more active than isoschizomeric RM.HgiBI. The protein is Type II restriction enzyme HgiEI of Herpetosiphon aurantiacus (Herpetosiphon giganteus).